The chain runs to 102 residues: ATP-dependent Clp protease adapter protein ClpS (102 aa).

Belongs to the ClpS family. In terms of assembly, binds to the N-terminal domain of the chaperone ClpA.

Its function is as follows. Involved in the modulation of the specificity of the ClpAP-mediated ATP-dependent protein degradation. The sequence is that of ATP-dependent Clp protease adapter protein ClpS from Herminiimonas arsenicoxydans.